The primary structure comprises 1178 residues: Pyruvate carboxylase, mitochondrial (1178 aa).

Residues 1-20 (MLKFRTVHGGLRLLGIRRTS) constitute a mitochondrion transit peptide. 2 positions are modified to N6-acetyllysine: K35 and K39. The region spanning 36-486 (PIKKVMVANR…DTQFIDENPE (451 aa)) is the Biotin carboxylation domain. An N6-acetyllysine; alternate modification is found at K79. Residue K79 is modified to N6-succinyllysine; alternate. N6-acetyllysine occurs at positions 148 and 152. Residues K152 and E236 each contribute to the ATP site. In terms of domain architecture, ATP-grasp spans 156-353 (RAIAIAAGVP…LVHAQIHVAE (198 aa)). The residue at position 241 (K241) is an N6-acetyllysine. An ATP-binding site is contributed by H271. Residues K297 and K319 each carry the N6-acetyllysine modification. Residue R328 is part of the active site. K434 is modified (N6-acetyllysine). Position 442 is an N6-succinyllysine (K442). The Pyruvate carboxyltransferase domain occupies 563-832 (LLLMDTTFRD…DTEVPMERVF (270 aa)). Residue 571-575 (RDAHQ) participates in substrate binding. D572 provides a ligand contact to Mn(2+). The residue at position 589 (K589) is an N6-acetyllysine. R644 is a binding site for substrate. An N6-acetyllysine mark is found at K661 and K717. Position 741 (K741) interacts with Mn(2+). N6-carboxylysine is present on K741. At K748 the chain carries N6-acetyllysine. Mn(2+) is bound by residues H771 and H773. An N6-acetyllysine modification is found at K892. T908 serves as a coordination point for substrate. K969 and K992 each carry N6-acetyllysine. The residue at position 1003 (T1003) is a Phosphothreonine. K1061, K1090, and K1124 each carry N6-acetyllysine. In terms of domain architecture, Biotinyl-binding spans 1109–1178 (KGQIGAPMPG…EGDDLILEIE (70 aa)). At K1144 the chain carries N6-biotinyllysine.

In terms of assembly, homotetramer. Interacts (via the biotin carboxylation domain) with SIRT4. Requires biotin as cofactor. The cofactor is Mn(2+). In terms of processing, acetylation of Lys-748 might play a role in catalytic activity regulation.

It localises to the mitochondrion matrix. The enzyme catalyses hydrogencarbonate + pyruvate + ATP = oxaloacetate + ADP + phosphate + H(+). It functions in the pathway carbohydrate biosynthesis; gluconeogenesis. Its function is as follows. Pyruvate carboxylase catalyzes a 2-step reaction, involving the ATP-dependent carboxylation of the covalently attached biotin in the first step and the transfer of the carboxyl group to pyruvate in the second. Catalyzes in a tissue specific manner, the initial reactions of glucose (liver, kidney) and lipid (adipose tissue, liver, brain) synthesis from pyruvate. This chain is Pyruvate carboxylase, mitochondrial, found in Homo sapiens (Human).